The chain runs to 917 residues: Nitrate reductase [NADH] 1 (917 aa).

Residues 62-81 (DSYDDSSSDDEDESHNRNVP) form a disordered region. Residues 63 to 74 (SYDDSSSDDEDE) show a composition bias toward acidic residues. Cys197 contacts Mo-molybdopterin. Residues 545–620 (SKMYSISEVR…LEDYRIGELI (76 aa)) enclose the Cytochrome b5 heme-binding domain. Residues His580 and His603 each contribute to the heme site. The FAD-binding FR-type domain maps to 660 to 772 (REKIPVRLIE…KGPLGHIEYK (113 aa)). FAD contacts are provided by residues 712–715 (RAYT), 729–733 (VVKVY), Phe734, Phe741, 746–748 (LMS), and Thr799.

It belongs to the nitrate reductase family. In terms of assembly, homodimer. Requires FAD as cofactor. It depends on heme as a cofactor. Mo-molybdopterin serves as cofactor. As to expression, root, leaf, and shoot.

It carries out the reaction nitrite + NAD(+) + H2O = nitrate + NADH + H(+). Nitrate reductase is a key enzyme involved in the first step of nitrate assimilation in plants, fungi and bacteria. The polypeptide is Nitrate reductase [NADH] 1 (NIA1) (Arabidopsis thaliana (Mouse-ear cress)).